Consider the following 263-residue polypeptide: Methylesterase 2 (263 aa).

Residue Ser-85 is the Acyl-ester intermediate of the active site. Catalysis depends on charge relay system residues Asp-213 and His-241.

It belongs to the AB hydrolase superfamily. Methylesterase family.

The catalysed reaction is methyl (indol-3-yl)acetate + H2O = (indol-3-yl)acetate + methanol + H(+). The enzyme catalyses methyl (-)-jasmonate + H2O = jasmonate + methanol + H(+). It carries out the reaction methyl salicylate + H2O = salicylate + methanol + H(+). It participates in plant hormone biosynthesis. It functions in the pathway lipid metabolism; oxylipin biosynthesis. With respect to regulation, esterase activity is down-regulated by salicylic acid (SA). Down-regulated by agrochemicals Paraoxon, 3,4-DCl and Profenofos. In terms of biological role, methylesterase shown to have carboxylesterase activity, methyl indole-3-acetic acid (MeIAA) esterase activity, methyl salicylate (MeSA) esterase activity and methyl jasmonate (MeJA) esterase activity in vitro. This is Methylesterase 2 from Arabidopsis thaliana (Mouse-ear cress).